A 170-amino-acid polypeptide reads, in one-letter code: Putative 3-methyladenine DNA glycosylase (170 aa).

Belongs to the DNA glycosylase MPG family.

In Sodalis glossinidius, this protein is Putative 3-methyladenine DNA glycosylase.